The primary structure comprises 168 residues: Photosystem I assembly protein Ycf3 (168 aa).

TPR repeat units follow at residues A35–P68, S72–L105, and G120–N153.

Belongs to the Ycf3 family.

The protein resides in the plastid. It localises to the chloroplast thylakoid membrane. Essential for the assembly of the photosystem I (PSI) complex. May act as a chaperone-like factor to guide the assembly of the PSI subunits. In Illicium oligandrum (Star anise), this protein is Photosystem I assembly protein Ycf3.